A 164-amino-acid polypeptide reads, in one-letter code: Urease subunit beta (164 aa).

Composition is skewed to polar residues over residues methionine 1–alanine 10 and threonine 20–glutamate 32. The disordered stretch occupies residues methionine 1 to glutamate 32.

Belongs to the urease beta subunit family. As to quaternary structure, heterotrimer of UreA (gamma), UreB (beta) and UreC (alpha) subunits. Three heterotrimers associate to form the active enzyme.

It is found in the cytoplasm. The enzyme catalyses urea + 2 H2O + H(+) = hydrogencarbonate + 2 NH4(+). It functions in the pathway nitrogen metabolism; urea degradation; CO(2) and NH(3) from urea (urease route): step 1/1. The protein is Urease subunit beta of Yersinia enterocolitica serotype O:8 / biotype 1B (strain NCTC 13174 / 8081).